Consider the following 203-residue polypeptide: Endo-type membrane-bound lytic murein transglycosylase A (203 aa).

An N-terminal signal peptide occupies residues 1–15 (MKLRWFAFLIVLLAG). Cysteine 16 carries the N-palmitoyl cysteine lipid modification. Cysteine 16 carries the S-diacylglycerol cysteine lipid modification.

It belongs to the transglycosylase Slt family.

Its subcellular location is the cell outer membrane. It carries out the reaction Endolytic cleavage of the (1-&gt;4)-beta-glycosidic linkage between N-acetylmuramic acid (MurNAc) and N-acetylglucosamine (GlcNAc) residues in peptidoglycan with concomitant formation of a 1,6-anhydrobond in the MurNAc residue.. Functionally, murein-degrading enzyme. May play a role in recycling of muropeptides during cell elongation and/or cell division. Preferentially cleaves at a distance of more than two disaccharide units from the ends of the glycan chain. The protein is Endo-type membrane-bound lytic murein transglycosylase A of Escherichia coli (strain K12 / MC4100 / BW2952).